The following is a 221-amino-acid chain: Probable chemoreceptor glutamine deamidase CheD 1 (221 aa).

Belongs to the CheD family.

It catalyses the reaction L-glutaminyl-[protein] + H2O = L-glutamyl-[protein] + NH4(+). In terms of biological role, probably deamidates glutamine residues to glutamate on methyl-accepting chemotaxis receptors (MCPs), playing an important role in chemotaxis. The polypeptide is Probable chemoreceptor glutamine deamidase CheD 1 (Methanosarcina mazei (strain ATCC BAA-159 / DSM 3647 / Goe1 / Go1 / JCM 11833 / OCM 88) (Methanosarcina frisia)).